The sequence spans 578 residues: 2-hydroxyacyl-CoA lyase 1 (578 aa).

At S4 the chain carries Phosphoserine. A thiamine diphosphate-binding site is contributed by E60. K351, K358, and K365 each carry N6-succinyllysine. Residues 401–486 (TMDIGRTVLQ…LLVVNNNGIY (86 aa)) are thiamine pyrophosphate binding. 2 residues coordinate Mg(2+): D455 and N482. Positions 576-578 (SNM) match the Microbody targeting signal motif.

This sequence belongs to the TPP enzyme family. Homotetramer. Mg(2+) serves as cofactor. The cofactor is thiamine diphosphate. As to expression, widely expressed.

The protein resides in the peroxisome. The catalysed reaction is a 2-hydroxy-3-methyl fatty acyl-CoA = a 2-methyl-branched fatty aldehyde + formyl-CoA. It carries out the reaction an (R)-2-hydroxy-long-chain-fatty acyl-CoA = a long-chain fatty aldehyde + formyl-CoA. It catalyses the reaction 2-hydroxy-3-methylhexadecanoyl-CoA = 2-methylpentadecanal + formyl-CoA. The enzyme catalyses 2-hydroxyoctadecanoyl-CoA = heptadecanal + formyl-CoA. The catalysed reaction is 2-hydroxyphytanoyl-CoA = 2,6,10,14-tetramethylpentadecanal + formyl-CoA. Its pathway is lipid metabolism; fatty acid metabolism. In terms of biological role, peroxisomal 2-OH acyl-CoA lyase involved in the cleavage (C1 removal) reaction in the fatty acid alpha-oxydation in a thiamine pyrophosphate (TPP)-dependent manner. Involved in the degradation of 3-methyl-branched fatty acids like phytanic acid and the shortening of 2-hydroxy long-chain fatty acids. Plays a significant role in the biosynthesis of heptadecanal in the liver. The protein is 2-hydroxyacyl-CoA lyase 1 of Homo sapiens (Human).